The primary structure comprises 474 residues: Salutaridinol 7-O-acetyltransferase (474 aa).

H163 serves as the catalytic Proton acceptor. Positions 213–234 (ERLTSPSGMSEIPFSSTPEDTE) are disordered. Polar residues predominate over residues 214–230 (RLTSPSGMSEIPFSSTP). D416 (proton acceptor) is an active-site residue.

This sequence belongs to the plant acyltransferase family. In terms of tissue distribution, expressed in root, stem, leaf and capsule of the mature plant. Restricted to sieve elements of the phloem adjacent or proximal to laticifers.

It catalyses the reaction (7S)-salutaridinol + acetyl-CoA = (7S)-O-acetylsalutaridinol + CoA. Its pathway is alkaloid biosynthesis; morphine biosynthesis. In terms of biological role, acetyltransferase involved in biosynthesis of morphinan-type benzylisoquinoline and opiate alkaloids natural products. Catalyzes the conversion of the phenanthrene alkaloid salutaridinol to salutaridinol-7-O-acetate, the immediate precursor of thebaine along the morphine biosynthetic pathway. Conversion of 7-O-acetylsalutaridinol into thebaine is spontaneous. This is Salutaridinol 7-O-acetyltransferase from Papaver somniferum (Opium poppy).